The primary structure comprises 407 residues: Na(+)-translocating NADH-quinone reductase subunit F (407 aa).

The helical transmembrane segment at 3-23 threads the bilayer; the sequence is ITLGIAMFTVIVLALAVLILF. In terms of domain architecture, 2Fe-2S ferredoxin-type spans 32–126; the sequence is GDITIEINDD…SMKIELPEEV (95 aa). 4 residues coordinate [2Fe-2S] cluster: Cys69, Cys75, Cys78, and Cys110. In terms of domain architecture, FAD-binding FR-type spans 129-269; sequence VKKWECTVIS…SGPFGEFFAK (141 aa).

It belongs to the NqrF family. In terms of assembly, composed of six subunits; NqrA, NqrB, NqrC, NqrD, NqrE and NqrF. [2Fe-2S] cluster is required as a cofactor. FAD serves as cofactor.

The protein localises to the cell inner membrane. The enzyme catalyses a ubiquinone + n Na(+)(in) + NADH + H(+) = a ubiquinol + n Na(+)(out) + NAD(+). Its function is as follows. NQR complex catalyzes the reduction of ubiquinone-1 to ubiquinol by two successive reactions, coupled with the transport of Na(+) ions from the cytoplasm to the periplasm. The first step is catalyzed by NqrF, which accepts electrons from NADH and reduces ubiquinone-1 to ubisemiquinone by a one-electron transfer pathway. The polypeptide is Na(+)-translocating NADH-quinone reductase subunit F (Histophilus somni (strain 129Pt) (Haemophilus somnus)).